The sequence spans 328 residues: Mitochondrial GTPase 1 (328 aa).

Residues 10–199 (KTTLKRLRDS…MVDTPGIMLP (190 aa)) form the CP-type G domain. Residues 57–60 (NKCD), 143–148 (NVGKSS), and G195 contribute to the GTP site.

It belongs to the TRAFAC class YlqF/YawG GTPase family. MTG1 subfamily.

Its subcellular location is the mitochondrion inner membrane. Its function is as follows. Mitochondrial GTPase involved in assembly of the large ribosomal subunit. Plays a role in expression of the mitochondrial translational machinery. The sequence is that of Mitochondrial GTPase 1 from Schizosaccharomyces japonicus (strain yFS275 / FY16936) (Fission yeast).